The chain runs to 448 residues: Tubulin beta chain (448 aa).

GTP contacts are provided by Q11, E69, S138, G142, T143, G144, N204, and N226. E69 contributes to the Mg(2+) binding site. The tract at residues 425-448 is disordered; the sequence is YQDAGVDEEEEEYDEEAPVEEPLE. Positions 429–448 are enriched in acidic residues; it reads GVDEEEEEYDEEAPVEEPLE.

Belongs to the tubulin family. In terms of assembly, dimer of alpha and beta chains. A typical microtubule is a hollow water-filled tube with an outer diameter of 25 nm and an inner diameter of 15 nM. Alpha-beta heterodimers associate head-to-tail to form protofilaments running lengthwise along the microtubule wall with the beta-tubulin subunit facing the microtubule plus end conferring a structural polarity. Microtubules usually have 13 protofilaments but different protofilament numbers can be found in some organisms and specialized cells. Requires Mg(2+) as cofactor.

It localises to the cytoplasm. The protein resides in the cytoskeleton. In terms of biological role, tubulin is the major constituent of microtubules, a cylinder consisting of laterally associated linear protofilaments composed of alpha- and beta-tubulin heterodimers. Microtubules grow by the addition of GTP-tubulin dimers to the microtubule end, where a stabilizing cap forms. Below the cap, tubulin dimers are in GDP-bound state, owing to GTPase activity of alpha-tubulin. This chain is Tubulin beta chain, found in Metarhizium anisopliae (Entomophthora anisopliae).